The following is a 453-amino-acid chain: Chromosomal replication initiator protein DnaA (453 aa).

Residues methionine 1–threonine 74 form a domain I, interacts with DnaA modulators region. The interval threonine 74–threonine 113 is domain II. The interval glycine 114–alanine 331 is domain III, AAA+ region. 4 residues coordinate ATP: glycine 158, glycine 160, lysine 161, and threonine 162. Residues arginine 332–lysine 453 form a domain IV, binds dsDNA region.

Belongs to the DnaA family. In terms of assembly, oligomerizes as a right-handed, spiral filament on DNA at oriC.

The protein localises to the cytoplasm. Plays an essential role in the initiation and regulation of chromosomal replication. ATP-DnaA binds to the origin of replication (oriC) to initiate formation of the DNA replication initiation complex once per cell cycle. Binds the DnaA box (a 9 base pair repeat at the origin) and separates the double-stranded (ds)DNA. Forms a right-handed helical filament on oriC DNA; dsDNA binds to the exterior of the filament while single-stranded (ss)DNA is stabiized in the filament's interior. The ATP-DnaA-oriC complex binds and stabilizes one strand of the AT-rich DNA unwinding element (DUE), permitting loading of DNA polymerase. After initiation quickly degrades to an ADP-DnaA complex that is not apt for DNA replication. Binds acidic phospholipids. The sequence is that of Chromosomal replication initiator protein DnaA from Streptococcus pneumoniae serotype 19F (strain G54).